Reading from the N-terminus, the 188-residue chain is dCTP deaminase (188 aa).

DCTP is bound by residues 111–116, 135–137, Q156, Y170, and Q180; these read KSTYAR and TLE. Residue E137 is the Proton donor/acceptor of the active site.

This sequence belongs to the dCTP deaminase family. In terms of assembly, homotrimer.

The catalysed reaction is dCTP + H2O + H(+) = dUTP + NH4(+). It participates in pyrimidine metabolism; dUMP biosynthesis; dUMP from dCTP (dUTP route): step 1/2. Its function is as follows. Catalyzes the deamination of dCTP to dUTP. In Nitrosococcus oceani (strain ATCC 19707 / BCRC 17464 / JCM 30415 / NCIMB 11848 / C-107), this protein is dCTP deaminase.